The following is a 463-amino-acid chain: Protein MRG3-like (463 aa).

A helical transmembrane segment spans residues 54-74 (WVLSTGIVSFIAFNIWWVYWP). TPR repeat units lie at residues 84 to 118 (KILRKGLHSEIKKEGANYQKSLEYYLEALEECKAE), 128 to 161 (TGIEIKIGEMYEKLHMYNDATALYGDMLKKFYNE), 358 to 389 (ELIRSRLQENQNSCLQYSADCYKSIISFANEN), and 409 to 442 (SLAHYGIGVINLHKGRLRASKKELKKAIRISEMI).

Belongs to the MGR3 family.

It localises to the membrane. This chain is Protein MRG3-like, found in Saccharomyces cerevisiae (strain ATCC 204508 / S288c) (Baker's yeast).